We begin with the raw amino-acid sequence, 372 residues long: Ligninase LG3 (372 aa).

The first 21 residues, 1–21 (MAFKQLFAAISLALSLSAANA), serve as a signal peptide directing secretion. Positions 22–28 (AAVIEKR) are excised as a propeptide. 2 disulfides stabilise this stretch: Cys31–Cys43 and Cys62–Cys148. His75 serves as the catalytic Proton acceptor. Positions 76, 94, 96, and 98 each coordinate Ca(2+). Residue His204 coordinates heme b. Residues Ser205, Asp222, Thr224, Ile227, and Asp229 each coordinate Ca(2+). Cys277 and Cys345 are joined by a disulfide. N-linked (GlcNAc...) asparagine glycosylation is present at Asn285. Over residues 350 to 361 (FPTLTTLPGPET) the composition is skewed to low complexity. The disordered stretch occupies residues 350 to 372 (FPTLTTLPGPETSVQRIPPPPGA).

Belongs to the peroxidase family. Ligninase subfamily. Requires heme b as cofactor. Ca(2+) serves as cofactor.

It catalyses the reaction 1-(3,4-dimethoxyphenyl)-2-(2-methoxyphenoxy)propane-1,3-diol + H2O2 = 3,4-dimethoxybenzaldehyde + guaiacol + glycolaldehyde + H2O. The catalysed reaction is 2 (3,4-dimethoxyphenyl)methanol + H2O2 = 2 (3,4-dimethoxyphenyl)methanol radical + 2 H2O. The protein operates within secondary metabolite metabolism; lignin degradation. Functionally, depolymerization of lignin. Catalyzes the C(alpha)-C(beta) cleavage of the propyl side chains of lignin. The protein is Ligninase LG3 (GLG3) of Phanerodontia chrysosporium (White-rot fungus).